A 383-amino-acid polypeptide reads, in one-letter code: Dynein axonemal assembly factor 11 (383 aa).

LRR repeat units follow at residues 20–45 (LSNLKEVALHQQDIERIELIGDACRE), 46–66 (LEILYLCNNYISRIEGLQHLK), 67–89 (YLKYLNLAVNNITYIEGLEGCEA), and 90–110 (LERLDLTLNFVADVTCVERLR). Residues 128-146 (VAGYRAYVVHALPQLRELD) enclose the LRRCT domain. The interval 201-244 (KGERLYGHTPEERLQMLREKEEEERRKREEQRERERSSQFGAIR) is disordered. Residues 211-239 (EERLQMLREKEEEERRKREEQRERERSSQ) adopt a coiled-coil conformation.

Belongs to the tilB family.

It is found in the cytoplasm. The protein localises to the cytoskeleton. The protein resides in the flagellum basal body. Its function is as follows. Involved in the regulation of the cell cycle; is required for the basal body replication and new flagellum biogenesis. The polypeptide is Dynein axonemal assembly factor 11 (dnaaf11) (Trypanosoma brucei brucei).